Reading from the N-terminus, the 438-residue chain is MSEASGRAAGNEMPAKKQKLSSDENSNPELSGDENDDSVSIESGTNTERPDTPTNAANAPGRKAWGKGKWKSKKCKYSFKCVNSLKEDHNQPLFGVQFNWHSKEGDPLVFATVGSNRVTLYECHPQGDIRLLQSYVDADADENFYTCAWTYDSNTSHPLLAVAGSRGIIRIINPITMQCIKHYVGHGNAINELKFHPRDPNLLLSVSKDHALRLWNIQTDTLVAIFGGVEGHRDEVLSADYDLLGEKIMSCGMDHSLKLWRINSLRMKTAIKESYEYNPSKTNRPFVSQKIHFPDFSTRDIHRNYVDCVRWLGDLILSKSCENAIVCWKPGKMEDDIDKIKPSESNVTILGRFDYSQCDIWYMRFSMDFWQKMLALGNQVGKLYVWDLEAEDPHKAKCTTLTYPKCASAVRQTSFSRDSSILVAVCDDATIWRWDRLR.

The tract at residues 1 to 67 is disordered; sequence MSEASGRAAG…NAPGRKAWGK (67 aa). Residues 40-57 show a composition bias toward polar residues; it reads SIESGTNTERPDTPTNAA. WD repeat units lie at residues 88–131, 139–182, 185–225, 231–270, 301–338, 356–396, and 405–438; these read DHNQ…DIRL, DADE…CIKH, GHGN…LVAI, GHRDEVLSADYDLLGEKIMSCGMDHSLKLWRINSLRMKTA, IHRNYVDCVRWLGDLILSKSCENAIVCWKPGKMEDDID, SQCD…PHKA, and KCASAVRQTSFSRDSSILVAVCDDATIWRWDRLR.

Belongs to the WD repeat ESC family. As to quaternary structure, component of the prc2/eed-ezh2 complex. Interacts with yy1. Can interact with ezh2, hdac1 and taf9.

It localises to the nucleus. Functionally, polycomb group (PcG) protein. Component of the prc2/eed-ezh2 complex, which methylates 'Lys-9' and 'Lys-27' of histone H3, leading to transcriptional repression of the affected target gene. In Xenopus laevis (African clawed frog), this protein is Polycomb protein eed-A (eed-a).